We begin with the raw amino-acid sequence, 255 residues long: Flagellar brake protein YcgR (255 aa).

The 116-residue stretch at 130–245 (QRREHFRVPL…MAAHLQRFVM (116 aa)) folds into the PilZ domain.

It belongs to the YcgR family. As to quaternary structure, monomer. Interacts with the flagellar basal bodies.

It localises to the bacterial flagellum basal body. Its function is as follows. Acts as a flagellar brake, regulating swimming and swarming in a bis-(3'-5') cyclic diguanylic acid (c-di-GMP)-dependent manner. Binds 1 c-di-GMP dimer per subunit. Increasing levels of c-di-GMP lead to decreased motility. This Thiobacillus denitrificans (strain ATCC 25259 / T1) protein is Flagellar brake protein YcgR.